Consider the following 613-residue polypeptide: UvrABC system protein C (613 aa).

The GIY-YIG domain occupies 13 to 92 (DKSGVYIMKD…IKKYKPKYNI (80 aa)). Positions 204–239 (DEIINDLRIQMETAAEQLDFEKAAQLRNKITSIKQL) constitute a UVR domain.

It belongs to the UvrC family. Interacts with UvrB in an incision complex.

Its subcellular location is the cytoplasm. The UvrABC repair system catalyzes the recognition and processing of DNA lesions. UvrC both incises the 5' and 3' sides of the lesion. The N-terminal half is responsible for the 3' incision and the C-terminal half is responsible for the 5' incision. The protein is UvrABC system protein C of Ruminiclostridium cellulolyticum (strain ATCC 35319 / DSM 5812 / JCM 6584 / H10) (Clostridium cellulolyticum).